The primary structure comprises 499 residues: Glycerol kinase (499 aa).

Thr-13 serves as a coordination point for ADP. ATP is bound by residues Thr-13, Thr-14, and Ser-15. Residue Thr-13 participates in sn-glycerol 3-phosphate binding. Residue Arg-17 coordinates ADP. 4 residues coordinate sn-glycerol 3-phosphate: Arg-83, Glu-84, Tyr-135, and Asp-245. Glycerol contacts are provided by Arg-83, Glu-84, Tyr-135, Asp-245, and Gln-246. 2 residues coordinate ADP: Thr-267 and Gly-310. Residues Thr-267, Gly-310, Gln-314, and Gly-411 each contribute to the ATP site. ADP contacts are provided by Gly-411 and Asn-415.

The protein belongs to the FGGY kinase family.

It carries out the reaction glycerol + ATP = sn-glycerol 3-phosphate + ADP + H(+). It participates in polyol metabolism; glycerol degradation via glycerol kinase pathway; sn-glycerol 3-phosphate from glycerol: step 1/1. Its activity is regulated as follows. Inhibited by fructose 1,6-bisphosphate (FBP). Functionally, key enzyme in the regulation of glycerol uptake and metabolism. Catalyzes the phosphorylation of glycerol to yield sn-glycerol 3-phosphate. This is Glycerol kinase from Xanthomonas campestris pv. campestris (strain 8004).